The following is a 473-amino-acid chain: Photosystem II CP43 reaction center protein (473 aa).

The propeptide occupies 1–14 (MKTLYSLRRFYPVE). The residue at position 15 (T15) is an N-acetylthreonine. T15 bears the Phosphothreonine mark. 5 helical membrane passes run 69–93 (LFEV…PHLA), 134–155 (LLGP…KDRN), 178–200 (KALY…RKIT), 255–275 (KPFA…LSYS), and 291–312 (WFNN…ASQA). E367 is a [CaMn4O5] cluster binding site. Residues 447–471 (RARAAAAGFEKGIDRDFEPVLSMTP) traverse the membrane as a helical segment.

The protein belongs to the PsbB/PsbC family. PsbC subfamily. In terms of assembly, PSII is composed of 1 copy each of membrane proteins PsbA, PsbB, PsbC, PsbD, PsbE, PsbF, PsbH, PsbI, PsbJ, PsbK, PsbL, PsbM, PsbT, PsbX, PsbY, PsbZ, Psb30/Ycf12, at least 3 peripheral proteins of the oxygen-evolving complex and a large number of cofactors. It forms dimeric complexes. It depends on Binds multiple chlorophylls and provides some of the ligands for the Ca-4Mn-5O cluster of the oxygen-evolving complex. It may also provide a ligand for a Cl- that is required for oxygen evolution. PSII binds additional chlorophylls, carotenoids and specific lipids. as a cofactor.

It localises to the plastid. The protein resides in the chloroplast thylakoid membrane. Its function is as follows. One of the components of the core complex of photosystem II (PSII). It binds chlorophyll and helps catalyze the primary light-induced photochemical processes of PSII. PSII is a light-driven water:plastoquinone oxidoreductase, using light energy to abstract electrons from H(2)O, generating O(2) and a proton gradient subsequently used for ATP formation. The protein is Photosystem II CP43 reaction center protein of Buxus microphylla (Littleleaf boxwood).